The chain runs to 283 residues: MQFLIVTGMSGAGKSVALNFFEDMGFFCIDNLPPALISKFAELCLHSELDKIAVVSDIRGREFFNALFSELSSLEKRGIDYEILFLEASDEVLIRRYKETRRRHPLDEEGRVLDAIRKERHLLEEIKGKANKIIDTSKLSKQELNHELKKVYSSYFIGKQSMSVTIISFGYKYGIPMDADLVFDVRFLPNPYYVRSLKERTGEETVVQDYILKWPVTQKFYKRFFDMMDFLLPEYSREGKSHFTIAIGCTGGKHRSVTTAIKLKEFLLSKGYHVVVEHKDISK.

An ATP-binding site is contributed by 8-15 (GMSGAGKS). A GTP-binding site is contributed by 57–60 (DIRG).

This sequence belongs to the RapZ-like family.

Displays ATPase and GTPase activities. The chain is Nucleotide-binding protein Hore_15880 from Halothermothrix orenii (strain H 168 / OCM 544 / DSM 9562).